The following is a 344-amino-acid chain: Phenylalanine--tRNA ligase alpha subunit (344 aa).

E256 contributes to the Mg(2+) binding site.

This sequence belongs to the class-II aminoacyl-tRNA synthetase family. Phe-tRNA synthetase alpha subunit type 1 subfamily. In terms of assembly, tetramer of two alpha and two beta subunits. Requires Mg(2+) as cofactor.

The protein localises to the cytoplasm. It catalyses the reaction tRNA(Phe) + L-phenylalanine + ATP = L-phenylalanyl-tRNA(Phe) + AMP + diphosphate + H(+). The protein is Phenylalanine--tRNA ligase alpha subunit (pheS) of Halalkalibacterium halodurans (strain ATCC BAA-125 / DSM 18197 / FERM 7344 / JCM 9153 / C-125) (Bacillus halodurans).